The sequence spans 500 residues: tRNA modification GTPase MnmE (500 aa).

3 residues coordinate (6S)-5-formyl-5,6,7,8-tetrahydrofolate: arginine 24, glutamate 120, and lysine 159. Residues 256 to 420 form the TrmE-type G domain; the sequence is GIPVAIIGET…LEKKLVQAAA (165 aa). A K(+)-binding site is contributed by asparagine 266. GTP contacts are provided by residues 266-271, 285-291, and 310-313; these read NAGKST, SDIHGTT, and DTAG. A Mg(2+)-binding site is contributed by serine 270. The K(+) site is built by serine 285, isoleucine 287, and threonine 290. Threonine 291 is a binding site for Mg(2+). Lysine 500 lines the (6S)-5-formyl-5,6,7,8-tetrahydrofolate pocket.

Belongs to the TRAFAC class TrmE-Era-EngA-EngB-Septin-like GTPase superfamily. TrmE GTPase family. As to quaternary structure, homodimer. Heterotetramer of two MnmE and two MnmG subunits. It depends on K(+) as a cofactor.

It is found in the cytoplasm. Its function is as follows. Exhibits a very high intrinsic GTPase hydrolysis rate. Involved in the addition of a carboxymethylaminomethyl (cmnm) group at the wobble position (U34) of certain tRNAs, forming tRNA-cmnm(5)s(2)U34. This is tRNA modification GTPase MnmE from Phocaeicola vulgatus (strain ATCC 8482 / DSM 1447 / JCM 5826 / CCUG 4940 / NBRC 14291 / NCTC 11154) (Bacteroides vulgatus).